The following is a 255-amino-acid chain: Proteasome subunit alpha type-3 (255 aa).

Ser-2 carries the N-acetylserine modification. Residues Lys-57, Lys-206, and Lys-230 each carry the N6-acetyllysine modification. Phosphoserine is present on residues Ser-243 and Ser-250.

It belongs to the peptidase T1A family. The 26S proteasome consists of a 20S proteasome core and two 19S regulatory subunits. The 20S proteasome core is a barrel-shaped complex made of 28 subunits that are arranged in four stacked rings. The two outer rings are each formed by seven alpha subunits, and the two inner rings are formed by seven beta subunits. The proteolytic activity is exerted by three beta-subunits PSMB5, PSMB6 and PSMB7. Interacts with AURKB. Interacts with CDKN1A. Interacts with MDM2 and RB1. Interacts with the C-terminus of TBXA2R isoform 2. Interacts with DNAJB2. Detected in liver (at protein level).

It is found in the cytoplasm. Its subcellular location is the nucleus. In terms of biological role, component of the 20S core proteasome complex involved in the proteolytic degradation of most intracellular proteins. This complex plays numerous essential roles within the cell by associating with different regulatory particles. Associated with two 19S regulatory particles, forms the 26S proteasome and thus participates in the ATP-dependent degradation of ubiquitinated proteins. The 26S proteasome plays a key role in the maintenance of protein homeostasis by removing misfolded or damaged proteins that could impair cellular functions, and by removing proteins whose functions are no longer required. Associated with the PA200 or PA28, the 20S proteasome mediates ubiquitin-independent protein degradation. This type of proteolysis is required in several pathways including spermatogenesis (20S-PA200 complex) or generation of a subset of MHC class I-presented antigenic peptides (20S-PA28 complex). Binds to the C-terminus of CDKN1A and thereby mediates its degradation. Negatively regulates the membrane trafficking of the cell-surface thromboxane A2 receptor (TBXA2R) isoform 2. The sequence is that of Proteasome subunit alpha type-3 (Psma3) from Mus musculus (Mouse).